Consider the following 122-residue polypeptide: Ig heavy chain V region M603 (122 aa).

Positions 1–121 constitute an Ig-like domain; it reads EVKLVESGGG…WGAGTTVTVS (121 aa).

The chain is Ig heavy chain V region M603 from Mus musculus (Mouse).